Consider the following 371-residue polypeptide: Putative glutamate--cysteine ligase 2 (371 aa).

Belongs to the glutamate--cysteine ligase type 2 family. YbdK subfamily. Homodimer.

The catalysed reaction is L-cysteine + L-glutamate + ATP = gamma-L-glutamyl-L-cysteine + ADP + phosphate + H(+). In terms of biological role, ATP-dependent carboxylate-amine ligase which exhibits weak glutamate--cysteine ligase activity. The chain is Putative glutamate--cysteine ligase 2 from Cronobacter sakazakii (strain ATCC BAA-894) (Enterobacter sakazakii).